Reading from the N-terminus, the 141-residue chain is MGRIMAIDYGLKRVGLSVTDPLQIIASPLTTVAANDTLTFLQTYVKKENVEAFVVGYPTDIKDKNTPIIVAISQFIELLQRNFPDQQIFQHDERYTSKLAAASLVEGGFKKKDRRNKENLDKLSATIILQSFLSSYKRHYI.

Belongs to the YqgF nuclease family.

Its subcellular location is the cytoplasm. Functionally, could be a nuclease involved in processing of the 5'-end of pre-16S rRNA. The sequence is that of Putative pre-16S rRNA nuclease from Amoebophilus asiaticus (strain 5a2).